The primary structure comprises 519 residues: Chaperone SurA (519 aa).

The first 31 residues, 1-31, serve as a signal peptide directing secretion; it reads MMRSLHSLRRMSGTVLALMLAAGLPLSAAQA. Composition is skewed to low complexity over residues 31 to 45 and 197 to 207; these read AQPA…QKPA and PAAAQATRAPA. Disordered stretches follow at residues 31-50 and 196-221; these read AQPA…PAPS and NPAA…PAQS. Positions 223–324 constitute a PpiC 1 domain; that stretch reads PAMLVLAQIL…NGFHILKVVD (102 aa). Residues 328 to 361 are disordered; the sequence is GGQPAQAARPAPAPAPQQPSSFQEGPSVAAPQGP. One can recognise a PpiC 2 domain in the interval 364 to 463; that stretch reads VTQTHARHIL…FGWHLIQVLE (100 aa).

It localises to the periplasm. It catalyses the reaction [protein]-peptidylproline (omega=180) = [protein]-peptidylproline (omega=0). Its function is as follows. Chaperone involved in the correct folding and assembly of outer membrane proteins. Recognizes specific patterns of aromatic residues and the orientation of their side chains, which are found more frequently in integral outer membrane proteins. May act in both early periplasmic and late outer membrane-associated steps of protein maturation. The chain is Chaperone SurA from Bordetella parapertussis (strain 12822 / ATCC BAA-587 / NCTC 13253).